The primary structure comprises 81 residues: MAHSVKVYDTCIGCTQCVRACPCDVLEMVPWDGCKAGQIASAPRTEDCIGCKRCETACPTDFLSVRVYLGAETTRSMGLAY.

4Fe-4S ferredoxin-type domains are found at residues 2-31 (AHSVKVYDTCIGCTQCVRACPCDVLEMVPW) and 39-68 (IASAPRTEDCIGCKRCETACPTDFLSVRVY). Residues Cys-11, Cys-14, Cys-17, Cys-21, Cys-48, Cys-51, Cys-54, and Cys-58 each coordinate [4Fe-4S] cluster.

In terms of assembly, the eukaryotic PSI reaction center is composed of at least 11 subunits. [4Fe-4S] cluster is required as a cofactor.

It localises to the plastid. It is found in the chloroplast thylakoid membrane. It carries out the reaction reduced [plastocyanin] + hnu + oxidized [2Fe-2S]-[ferredoxin] = oxidized [plastocyanin] + reduced [2Fe-2S]-[ferredoxin]. Functionally, apoprotein for the two 4Fe-4S centers FA and FB of photosystem I (PSI); essential for photochemical activity. FB is the terminal electron acceptor of PSI, donating electrons to ferredoxin. The C-terminus interacts with PsaA/B/D and helps assemble the protein into the PSI complex. Required for binding of PsaD and PsaE to PSI. PSI is a plastocyanin/cytochrome c6-ferredoxin oxidoreductase, converting photonic excitation into a charge separation, which transfers an electron from the donor P700 chlorophyll pair to the spectroscopically characterized acceptors A0, A1, FX, FA and FB in turn. This is Photosystem I iron-sulfur center from Gracilaria tenuistipitata var. liui (Red alga).